The primary structure comprises 253 residues: Type III pantothenate kinase (253 aa).

An ATP-binding site is contributed by 6–13 (DVGNTNIV). Substrate is bound at residue 107–110 (GADR). Catalysis depends on D109, which acts as the Proton acceptor. A K(+)-binding site is contributed by D129. T132 is an ATP binding site. T184 contacts substrate.

Belongs to the type III pantothenate kinase family. As to quaternary structure, homodimer. NH4(+) is required as a cofactor. Requires K(+) as cofactor.

Its subcellular location is the cytoplasm. The catalysed reaction is (R)-pantothenate + ATP = (R)-4'-phosphopantothenate + ADP + H(+). It participates in cofactor biosynthesis; coenzyme A biosynthesis; CoA from (R)-pantothenate: step 1/5. Its function is as follows. Catalyzes the phosphorylation of pantothenate (Pan), the first step in CoA biosynthesis. In Exiguobacterium sibiricum (strain DSM 17290 / CCUG 55495 / CIP 109462 / JCM 13490 / 255-15), this protein is Type III pantothenate kinase.